A 366-amino-acid polypeptide reads, in one-letter code: Alanine racemase (366 aa).

K40 functions as the Proton acceptor; specific for D-alanine in the catalytic mechanism. K40 carries the post-translational modification N6-(pyridoxal phosphate)lysine. R136 lines the substrate pocket. Residue Y263 is the Proton acceptor; specific for L-alanine of the active site. M310 serves as a coordination point for substrate.

It belongs to the alanine racemase family. The cofactor is pyridoxal 5'-phosphate.

It carries out the reaction L-alanine = D-alanine. The protein operates within amino-acid biosynthesis; D-alanine biosynthesis; D-alanine from L-alanine: step 1/1. In terms of biological role, catalyzes the interconversion of L-alanine and D-alanine. May also act on other amino acids. The chain is Alanine racemase (alr) from Streptococcus pyogenes serotype M6 (strain ATCC BAA-946 / MGAS10394).